We begin with the raw amino-acid sequence, 373 residues long: Arabinonate dehydratase (373 aa).

Mg(2+)-binding residues include D199, E225, and E251.

It belongs to the mandelate racemase/muconate lactonizing enzyme family. As to quaternary structure, homooctamer. Requires Mg(2+) as cofactor.

The enzyme catalyses D-arabinonate = 2-dehydro-3-deoxy-D-arabinonate + H2O. With respect to regulation, inhibited by substrate levels above 8 mM. Functionally, catalyzes the dehydration of D-arabinonate to 2-keto-3-deoxy-D-arabinonate. Participates in a pentose oxidation pathway that converts D-arabinonate to 2-oxoglutarate. This Saccharolobus solfataricus (strain ATCC 35092 / DSM 1617 / JCM 11322 / P2) (Sulfolobus solfataricus) protein is Arabinonate dehydratase.